We begin with the raw amino-acid sequence, 163 residues long: Neurotrophin-3 (163 aa).

Positions 1–3 are cleaved as a signal peptide; it reads IQS. Positions 4-119 are excised as a propeptide; it reads TSMDQGILTE…VLNRTSRRKR (116 aa). Residue Asn-112 is glycosylated (N-linked (GlcNAc...) asparagine).

This sequence belongs to the NGF-beta family.

It is found in the secreted. Functionally, seems to promote the survival of visceral and proprioceptive sensory neurons. This is Neurotrophin-3 (NTF3) from Eryx conicus (Rough-scaled sand boa).